The sequence spans 713 residues: Ribosomal RNA large subunit methyltransferase K/L (713 aa).

In terms of domain architecture, THUMP spans 43 to 154 (LLYRALLWSR…RDQVMLSLDL (112 aa)).

It belongs to the methyltransferase superfamily. RlmKL family.

Its subcellular location is the cytoplasm. It catalyses the reaction guanosine(2445) in 23S rRNA + S-adenosyl-L-methionine = N(2)-methylguanosine(2445) in 23S rRNA + S-adenosyl-L-homocysteine + H(+). The catalysed reaction is guanosine(2069) in 23S rRNA + S-adenosyl-L-methionine = N(2)-methylguanosine(2069) in 23S rRNA + S-adenosyl-L-homocysteine + H(+). Functionally, specifically methylates the guanine in position 2445 (m2G2445) and the guanine in position 2069 (m7G2069) of 23S rRNA. The protein is Ribosomal RNA large subunit methyltransferase K/L of Sodalis glossinidius (strain morsitans).